Reading from the N-terminus, the 258-residue chain is Isoprenyl transferase (258 aa).

Asp38 is an active-site residue. Mg(2+) is bound at residue Asp38. Substrate-binding positions include 39–42 (GNGR), Trp43, Arg51, His55, and 83–85 (STE). Asn86 (proton acceptor) is an active-site residue. Substrate-binding positions include Trp87, Arg89, Arg206, and 212 to 214 (RIS). Glu225 contacts Mg(2+).

This sequence belongs to the UPP synthase family. As to quaternary structure, homodimer. Mg(2+) serves as cofactor.

In terms of biological role, catalyzes the condensation of isopentenyl diphosphate (IPP) with allylic pyrophosphates generating different type of terpenoids. In Bacillus anthracis, this protein is Isoprenyl transferase.